Consider the following 633-residue polypeptide: MSYEFDENFDVIVVGAGHAGVEASLAAARMGCKVLLATINLEMLAFMPCNPSIGGSAKGIVVREIDALGGEMGKNIDKTYIQMKMLNTGKGPAVRALRAQADKALYAMTMKHTVERQENLTLRQSMVDEILVEDSKVVGVRTATNQKYGAKAVVVTTGTALRGEIIIGDLKYSSGPNNSLASVTLADNLKELGLEIGRFKTGTPPRVKASSINYEETEIQPGDEKPNHFSFLSKDEDYLQDQIPCWLTYTNQESHDIINNNLHRAPMFSGIVKGVGPRYCPSIEDKIVRFADKNRHQLFLEPEGRETEEVYVQGLSTSLPEDVQKELIHSIKGLEKAEMIRTGYAIEYDIVLPHQLRATLETKLISGLFTAGQTNGTSGYEEAAGQGLVAGINAALKVQGKPELILKRSDAYIGVMIDDLVTKGTLEPYRLLTSRAEYRLILRHDNADMRLTPIGREVGLVDDERWNIFKIKKNQFDRELTRLSKEKLKPIKETNEKIQALGFKPLTDAMTAKEFMRRPEIDYATATQFVGPAAEDLDAKVIELLETEIKYEGYINKALDQVAKMKRMEEKKIPENIDWDAIDSIATEARQKFKKINPETIGQASRISGVNPADISILMVYLEGNNKARRKVD.

FAD contacts are provided by residues 15–20 (GAGHAG), valine 127, and serine 182. 276–290 (GPRYCPSIEDKIVRF) is a binding site for NAD(+). Glutamine 373 is an FAD binding site.

It belongs to the MnmG family. In terms of assembly, homodimer. Heterotetramer of two MnmE and two MnmG subunits. FAD serves as cofactor.

Its subcellular location is the cytoplasm. In terms of biological role, NAD-binding protein involved in the addition of a carboxymethylaminomethyl (cmnm) group at the wobble position (U34) of certain tRNAs, forming tRNA-cmnm(5)s(2)U34. This chain is tRNA uridine 5-carboxymethylaminomethyl modification enzyme MnmG, found in Streptococcus thermophilus (strain CNRZ 1066).